We begin with the raw amino-acid sequence, 1430 residues long: Gag-Pol polyprotein (1430 aa).

Gly-2 carries the N-myristoyl glycine; by host lipid modification. The segment at 7–31 (VLSGGKLDAWEKIRLKPGGKKRYRL) is interaction with Gp41. Positions 8 to 43 (LSGGKLDAWEKIRLKPGGKKRYRLKHLVWASRELER) are interaction with host CALM1. The interval 12-19 (KLDAWEKI) is interaction with host AP3D1. The segment at 14 to 33 (DAWEKIRLKPGGKKRYRLKH) is interaction with membrane phosphatidylinositol 4,5-bisphosphate and RNA. The Nuclear export signal motif lies at 16-22 (WEKIRLK). A Nuclear localization signal motif is present at residues 26–32 (KKRYRLK). The interaction with membrane phosphatidylinositol 4,5-bisphosphate stretch occupies residues 73 to 77 (EELKS). Residues 105-124 (QEEQDKSQQKEQQKAADKEV) form a disordered region. Tyr-128 carries the phosphotyrosine; by host modification. The interval 185–223 (NTVGGHQAAMQMLKDTINEEAAEWDRLHPVHAGPIPPGQ) is interaction with human PPIA/CYPA and NUP153. Positions 273 to 359 (YSPVSILDIK…GGPGHKARIL (87 aa)) are dimerization/Multimerization of capsid protein p24. 2 consecutive CCHC-type zinc fingers follow at residues 385–402 (VKCF…NCRA) and 406–423 (KGCW…DCTE). The disordered stretch occupies residues 440 to 479 (ARKFSSEQTRANSPASRELRVRRGDNPLPEAGAERRGTGS). Over residues 445–454 (SEQTRANSPA) the composition is skewed to polar residues. A dimerization of protease region spans residues 484–488 (PQITL). Residues 503–572 (REALLDTGAD…TPVNIIGRNL (70 aa)) enclose the Peptidase A2 domain. The active-site For protease activity; shared with dimeric partner is Asp-508. Dimerization of protease stretches follow at residues 532–538 (GIGGFIK) and 571–583 (NLLT…LNFP). Positions 626–816 (EGKISKIGPE…PPFLWMGYEL (191 aa)) constitute a Reverse transcriptase domain. Mg(2+) contacts are provided by Asp-692, Asp-767, and Asp-768. Positions 809–817 (FLWMGYELH) are RT 'primer grip'. Residues 980–996 (WEIWWTEYWQATWIPEW) carry the Tryptophan repeat motif motif. The region spanning 1016-1139 (IAGAETFYVD…VDKLVSSGIR (124 aa)) is the RNase H type-1 domain. Mg(2+) is bound by residues Asp-1025, Glu-1060, Asp-1080, and Asp-1131. Residues 1145–1186 (DGIDKAQEEHEKYHNNWRAMASDFNLPPVVAKEIVANCDKCQ) form an Integrase-type zinc finger. Positions 1154, 1158, 1182, and 1185 each coordinate Zn(2+). Residues 1196 to 1346 (VDCSPGIWQL…SAGERIIDII (151 aa)) enclose the Integrase catalytic domain. Positions 1206, 1258, and 1294 each coordinate Mg(2+). The integrase-type DNA-binding region spans 1365–1412 (FRVYFRDSRDPVWKGPAKLLWKGEGAVVIQDNNEIKVVPRRKAKIIRD).

Homotrimer; further assembles as hexamers of trimers. Interacts with gp41 (via C-terminus). Interacts with host CALM1; this interaction induces a conformational change in the Matrix protein, triggering exposure of the myristate group. Interacts with host AP3D1; this interaction allows the polyprotein trafficking to multivesicular bodies during virus assembly. Part of the pre-integration complex (PIC) which is composed of viral genome, matrix protein, Vpr and integrase. In terms of assembly, homodimer; the homodimer further multimerizes as homohexamers or homopentamers. Interacts with human PPIA/CYPA; This interaction stabilizes the capsid. Interacts with human NUP153. Interacts with host PDZD8; this interaction stabilizes the capsid. Interacts with monkey TRIM5; this interaction destabilizes the capsid. As to quaternary structure, homodimer, whose active site consists of two apposed aspartic acid residues. Heterodimer of p66 RT and p51 RT (RT p66/p51). Heterodimerization of RT is essential for DNA polymerase activity. The overall folding of the subdomains is similar in p66 RT and p51 RT but the spatial arrangements of the subdomains are dramatically different. In terms of assembly, homotetramer; may further associate as a homohexadecamer. Part of the pre-integration complex (PIC) which is composed of viral genome, matrix protein, Vpr and integrase. Interacts with human SMARCB1/INI1 and human PSIP1/LEDGF isoform 1. Interacts with human KPNA3; this interaction might play a role in nuclear import of the pre-integration complex. Interacts with human NUP153; this interaction might play a role in nuclear import of the pre-integration complex. It depends on Mg(2+) as a cofactor. Specific enzymatic cleavages by the viral protease yield mature proteins. The protease is released by autocatalytic cleavage. The polyprotein is cleaved during and after budding, this process is termed maturation. Proteolytic cleavage of p66 RT removes the RNase H domain to yield the p51 RT subunit. Nucleocapsid protein p7 might be further cleaved after virus entry. Post-translationally, tyrosine phosphorylated presumably in the virion by a host kinase. Phosphorylation is apparently not a major regulator of membrane association. In terms of processing, phosphorylated possibly by host MAPK1; this phosphorylation is necessary for Pin1-mediated virion uncoating. Methylated by host PRMT6, impairing its function by reducing RNA annealing and the initiation of reverse transcription.

It is found in the host cell membrane. Its subcellular location is the host endosome. The protein resides in the host multivesicular body. The protein localises to the virion membrane. It localises to the host nucleus. It is found in the host cytoplasm. Its subcellular location is the virion. It carries out the reaction Specific for a P1 residue that is hydrophobic, and P1' variable, but often Pro.. The catalysed reaction is Endohydrolysis of RNA in RNA/DNA hybrids. Three different cleavage modes: 1. sequence-specific internal cleavage of RNA. Human immunodeficiency virus type 1 and Moloney murine leukemia virus enzymes prefer to cleave the RNA strand one nucleotide away from the RNA-DNA junction. 2. RNA 5'-end directed cleavage 13-19 nucleotides from the RNA end. 3. DNA 3'-end directed cleavage 15-20 nucleotides away from the primer terminus.. It catalyses the reaction 3'-end directed exonucleolytic cleavage of viral RNA-DNA hybrid.. The enzyme catalyses DNA(n) + a 2'-deoxyribonucleoside 5'-triphosphate = DNA(n+1) + diphosphate. With respect to regulation, protease: The viral protease is inhibited by many synthetic protease inhibitors (PIs), such as amprenavir, atazanavir, indinavir, loprinavir, nelfinavir, ritonavir and saquinavir. Use of protease inhibitors in tritherapy regimens permit more ambitious therapeutic strategies. Reverse transcriptase/ribonuclease H: RT can be inhibited either by nucleoside RT inhibitors (NRTIs) or by non nucleoside RT inhibitors (NNRTIs). NRTIs act as chain terminators, whereas NNRTIs inhibit DNA polymerization by binding a small hydrophobic pocket near the RT active site and inducing an allosteric change in this region. Classical NRTIs are abacavir, adefovir (PMEA), didanosine (ddI), lamivudine (3TC), stavudine (d4T), tenofovir (PMPA), zalcitabine (ddC), and zidovudine (AZT). Classical NNRTIs are atevirdine (BHAP U-87201E), delavirdine, efavirenz (DMP-266), emivirine (I-EBU), and nevirapine (BI-RG-587). The tritherapies used as a basic effective treatment of AIDS associate two NRTIs and one NNRTI. Mediates, with Gag polyprotein, the essential events in virion assembly, including binding the plasma membrane, making the protein-protein interactions necessary to create spherical particles, recruiting the viral Env proteins, and packaging the genomic RNA via direct interactions with the RNA packaging sequence (Psi). Gag-Pol polyprotein may regulate its own translation, by the binding genomic RNA in the 5'-UTR. At low concentration, the polyprotein would promote translation, whereas at high concentration, the polyprotein would encapsidate genomic RNA and then shut off translation. Its function is as follows. Targets the polyprotein to the plasma membrane via a multipartite membrane-binding signal, that includes its myristoylated N-terminus. Matrix protein is part of the pre-integration complex. Implicated in the release from host cell mediated by Vpu. Binds to RNA. Functionally, forms the conical core that encapsulates the genomic RNA-nucleocapsid complex in the virion. Most core are conical, with only 7% tubular. The core is constituted by capsid protein hexamer subunits. The core is disassembled soon after virion entry. Host restriction factors such as TRIM5-alpha or TRIMCyp bind retroviral capsids and cause premature capsid disassembly, leading to blocks in reverse transcription. Capsid restriction by TRIM5 is one of the factors which restricts HIV-1 to the human species. Host PIN1 apparently facilitates the virion uncoating. On the other hand, interactions with PDZD8 or CYPA stabilize the capsid. In terms of biological role, encapsulates and protects viral dimeric unspliced genomic RNA (gRNA). Binds these RNAs through its zinc fingers. Acts as a nucleic acid chaperone which is involved in rearangement of nucleic acid secondary structure during gRNA retrotranscription. Also facilitates template switch leading to recombination. As part of the polyprotein, participates in gRNA dimerization, packaging, tRNA incorporation and virion assembly. Aspartyl protease that mediates proteolytic cleavages of Gag and Gag-Pol polyproteins during or shortly after the release of the virion from the plasma membrane. Cleavages take place as an ordered, step-wise cascade to yield mature proteins. This process is called maturation. Displays maximal activity during the budding process just prior to particle release from the cell. Also cleaves Nef and Vif, probably concomitantly with viral structural proteins on maturation of virus particles. Hydrolyzes host EIF4GI and PABP1 in order to shut off the capped cellular mRNA translation. The resulting inhibition of cellular protein synthesis serves to ensure maximal viral gene expression and to evade host immune response. Also mediates cleavage of host YTHDF3. Mediates cleavage of host CARD8, thereby activating the CARD8 inflammasome, leading to the clearance of latent HIV-1 in patient CD4(+) T-cells after viral reactivation; in contrast, HIV-1 can evade CARD8-sensing when its protease remains inactive in infected cells prior to viral budding. Its function is as follows. Multifunctional enzyme that converts the viral RNA genome into dsDNA in the cytoplasm, shortly after virus entry into the cell. This enzyme displays a DNA polymerase activity that can copy either DNA or RNA templates, and a ribonuclease H (RNase H) activity that cleaves the RNA strand of RNA-DNA heteroduplexes in a partially processive 3' to 5' endonucleasic mode. Conversion of viral genomic RNA into dsDNA requires many steps. A tRNA(3)-Lys binds to the primer-binding site (PBS) situated at the 5'-end of the viral RNA. RT uses the 3' end of the tRNA primer to perform a short round of RNA-dependent minus-strand DNA synthesis. The reading proceeds through the U5 region and ends after the repeated (R) region which is present at both ends of viral RNA. The portion of the RNA-DNA heteroduplex is digested by the RNase H, resulting in a ssDNA product attached to the tRNA primer. This ssDNA/tRNA hybridizes with the identical R region situated at the 3' end of viral RNA. This template exchange, known as minus-strand DNA strong stop transfer, can be either intra- or intermolecular. RT uses the 3' end of this newly synthesized short ssDNA to perform the RNA-dependent minus-strand DNA synthesis of the whole template. RNase H digests the RNA template except for two polypurine tracts (PPTs) situated at the 5'-end and near the center of the genome. It is not clear if both polymerase and RNase H activities are simultaneous. RNase H probably can proceed both in a polymerase-dependent (RNA cut into small fragments by the same RT performing DNA synthesis) and a polymerase-independent mode (cleavage of remaining RNA fragments by free RTs). Secondly, RT performs DNA-directed plus-strand DNA synthesis using the PPTs that have not been removed by RNase H as primers. PPTs and tRNA primers are then removed by RNase H. The 3' and 5' ssDNA PBS regions hybridize to form a circular dsDNA intermediate. Strand displacement synthesis by RT to the PBS and PPT ends produces a blunt ended, linear dsDNA copy of the viral genome that includes long terminal repeats (LTRs) at both ends. Functionally, catalyzes viral DNA integration into the host chromosome, by performing a series of DNA cutting and joining reactions. This enzyme activity takes place after virion entry into a cell and reverse transcription of the RNA genome in dsDNA. The first step in the integration process is 3' processing. This step requires a complex comprising the viral genome, matrix protein, Vpr and integrase. This complex is called the pre-integration complex (PIC). The integrase protein removes 2 nucleotides from each 3' end of the viral DNA, leaving recessed CA OH's at the 3' ends. In the second step, the PIC enters cell nucleus. This process is mediated through integrase and Vpr proteins, and allows the virus to infect a non dividing cell. This ability to enter the nucleus is specific of lentiviruses, other retroviruses cannot and rely on cell division to access cell chromosomes. In the third step, termed strand transfer, the integrase protein joins the previously processed 3' ends to the 5' ends of strands of target cellular DNA at the site of integration. The 5'-ends are produced by integrase-catalyzed staggered cuts, 5 bp apart. A Y-shaped, gapped, recombination intermediate results, with the 5'-ends of the viral DNA strands and the 3' ends of target DNA strands remaining unjoined, flanking a gap of 5 bp. The last step is viral DNA integration into host chromosome. This involves host DNA repair synthesis in which the 5 bp gaps between the unjoined strands are filled in and then ligated. Since this process occurs at both cuts flanking the HIV genome, a 5 bp duplication of host DNA is produced at the ends of HIV-1 integration. Alternatively, Integrase may catalyze the excision of viral DNA just after strand transfer, this is termed disintegration. The protein is Gag-Pol polyprotein (gag-pol) of Human immunodeficiency virus type 1 group M subtype F2 (isolate MP255) (HIV-1).